The primary structure comprises 353 residues: Photosystem II protein D1 (353 aa).

The residue at position 2 (Thr-2) is an N-acetylthreonine. Thr-2 is modified (phosphothreonine). 3 helical membrane passes run 29–46 (YIGW…TATS), 118–133 (HFLL…EWEL), and 142–156 (WIAV…AATA). A chlorophyll a-binding site is contributed by His-118. A pheophytin a-binding site is contributed by Tyr-126. Residues Asp-170 and Glu-189 each contribute to the [CaMn4O5] cluster site. A helical transmembrane segment spans residues 197-218 (FHMLGVAGVFGGSLFSAMHGSL). His-198 is a binding site for chlorophyll a. Residues His-215 and 264–265 (SF) contribute to the a quinone site. Position 215 (His-215) interacts with Fe cation. Residue His-272 participates in Fe cation binding. A helical membrane pass occupies residues 274–288 (FLAAWPVVGIWFTAL). His-332, Glu-333, Asp-342, and Ala-344 together coordinate [CaMn4O5] cluster. Positions 345–353 (AIEAPATNG) are excised as a propeptide.

It belongs to the reaction center PufL/M/PsbA/D family. In terms of assembly, PSII is composed of 1 copy each of membrane proteins PsbA, PsbB, PsbC, PsbD, PsbE, PsbF, PsbH, PsbI, PsbJ, PsbK, PsbL, PsbM, PsbT, PsbX, PsbY, PsbZ, Psb30/Ycf12, at least 3 peripheral proteins of the oxygen-evolving complex and a large number of cofactors. It forms dimeric complexes. Requires The D1/D2 heterodimer binds P680, chlorophylls that are the primary electron donor of PSII, and subsequent electron acceptors. It shares a non-heme iron and each subunit binds pheophytin, quinone, additional chlorophylls, carotenoids and lipids. D1 provides most of the ligands for the Mn4-Ca-O5 cluster of the oxygen-evolving complex (OEC). There is also a Cl(-1) ion associated with D1 and D2, which is required for oxygen evolution. The PSII complex binds additional chlorophylls, carotenoids and specific lipids. as cofactor. In terms of processing, tyr-161 forms a radical intermediate that is referred to as redox-active TyrZ, YZ or Y-Z. Post-translationally, C-terminally processed by CTPA; processing is essential to allow assembly of the oxygen-evolving complex and thus photosynthetic growth.

It is found in the plastid membrane. The enzyme catalyses 2 a plastoquinone + 4 hnu + 2 H2O = 2 a plastoquinol + O2. Its function is as follows. Photosystem II (PSII) is a light-driven water:plastoquinone oxidoreductase that uses light energy to abstract electrons from H(2)O, generating O(2) and a proton gradient subsequently used for ATP formation. It consists of a core antenna complex that captures photons, and an electron transfer chain that converts photonic excitation into a charge separation. The D1/D2 (PsbA/PsbD) reaction center heterodimer binds P680, the primary electron donor of PSII as well as several subsequent electron acceptors. In Cuscuta exaltata (Tall dodder), this protein is Photosystem II protein D1.